The following is a 180-amino-acid chain: DNA-directed RNA polymerase subunit Rpo7 (180 aa).

The region spanning 82 to 165 (QEVVEGEVLQ…RLPRIALTMR (84 aa)) is the S1 motif domain.

It belongs to the eukaryotic RPB7/RPC8 RNA polymerase subunit family. As to quaternary structure, part of the 13-subunit RNA polymerase complex. Forms a stalk with Rpo4 that extends from the main structure.

It localises to the cytoplasm. It carries out the reaction RNA(n) + a ribonucleoside 5'-triphosphate = RNA(n+1) + diphosphate. DNA-dependent RNA polymerase (RNAP) catalyzes the transcription of DNA into RNA using the four ribonucleoside triphosphates as substrates. The highly mobile Rpo4/Rpo7 heterodimer is conditionally required for transcription initiation. This is DNA-directed RNA polymerase subunit Rpo7 from Saccharolobus shibatae (strain ATCC 51178 / DSM 5389 / JCM 8931 / NBRC 15437 / B12) (Sulfolobus shibatae).